The primary structure comprises 695 residues: Potassium voltage-gated channel subfamily KQT member 4 (695 aa).

The segment at 1–21 (MAEAPPRRLGLGPPPGDAPRA) is disordered. Topologically, residues 1–96 (MAEAPPRRLG…VYNVLERPRG (96 aa)) are cytoplasmic. Arg93 contributes to the a 1,2-diacyl-sn-glycero-3-phospho-(1D-myo-inositol-4,5-bisphosphate) binding site. Residues 97 to 118 (WAFVYHVFIFLLVFSCLVLSVL) form a helical membrane-spanning segment. The Extracellular portion of the chain corresponds to 119–129 (STIQEHQELAN). The chain crosses the membrane as a helical span at residues 130–152 (ECLLILEFVMIVVFGLEYIIRVW). Topologically, residues 153-168 (SAGCCCRYRGWQGRFR) are cytoplasmic. A helical transmembrane segment spans residues 169 to 191 (FARKPFCVIDFIVFVASVAVIAA). A 1,2-diacyl-sn-glycero-3-phospho-(1D-myo-inositol-4,5-bisphosphate) is bound at residue Lys172. Residues 192–202 (GTQGNIFATSA) lie on the Extracellular side of the membrane. A helical; Voltage-sensor transmembrane segment spans residues 203–223 (LRSMRFLQILRMVRMDRRGGT). Residues Arg219, Arg220, Lys225, and Ser235 each coordinate a 1,2-diacyl-sn-glycero-3-phospho-(1D-myo-inositol-4,5-bisphosphate). Residues 224–235 (WKLLGSVVYAHS) lie on the Cytoplasmic side of the membrane. The helical transmembrane segment at 236–258 (KELITAWYIGFLVLIFASFLVYL) threads the bilayer. The Extracellular segment spans residues 259–270 (AEKDANSDFSSY). Positions 271 to 292 (ADSLWWGTITLTTIGYGDKTPH) form an intramembrane region, pore-forming. Thr293 is a topological domain (extracellular). A helical transmembrane segment spans residues 294 to 322 (WLGRVLAAGFALLGISFFALPAGILGSGF). The Cytoplasmic segment spans residues 323 to 695 (ALKVQEQHRQ…ISRSVSTNMD (373 aa)). Positions 330 and 333 each coordinate a 1,2-diacyl-sn-glycero-3-phospho-(1D-myo-inositol-4,5-bisphosphate). An interaction with CALM region spans residues 342–351 (AANLIQAAWR). The tract at residues 441 to 483 (RMSSSQKRTGPSKQHLAPPPIPTSPSSEQVGEASSPSKVQKSW) is disordered. Composition is skewed to polar residues over residues 442–452 (MSSSQKRTGPS) and 464–483 (SPSS…QKSW). The segment at 535–549 (RSVRILKFLVAKRKF) is interaction with CALM. Residues 546 to 650 (KRKFKETLRP…SRCLRSGTSA (105 aa)) form a C-terminal assembly domain (tetramerization) region. A disordered region spans residues 588–608 (GRGPGDRKTREKGDKGPSDTE). Over residues 591–605 (PGDRKTREKGDKGPS) the composition is skewed to basic and acidic residues.

The protein belongs to the potassium channel family. KQT (TC 1.A.1.15) subfamily. Kv7.4/KCNQ4 sub-subfamily. Homotetramer. Interacts (via C-terminus) with calmodulin; forms a heterooctameric structure (with 4:4 KCNQ1:CALM stoichiometry); the interaction is calcium-independent, constitutive, participates in the proper assembly of a functional channel. The interaction with calcium-free CALM controls channel trafficking whereas interaction with calcium-bound CALM regulates channel gating. May form a functional heteromultimeric channel with KCNQ3. Interacts with HSP90AB1; promotes cell surface expression of KCNQ4. Expressed in both the inner (IHCs) and the outer hair cells (OHCs) of the cochlea. Reciprocal longitudinal gradients of expression is present in IHCs and OHCs. The strongest expression in IHCs is in the base of the cochlea and in the apex for OHCs. A basal to apical gradient of expression is also present in both type I and type II spiral ganglion cells.

It localises to the basal cell membrane. The catalysed reaction is K(+)(in) = K(+)(out). Its activity is regulated as follows. Two molecules of phosphatidylinositol-4,5-bisphosphate (PIP2-I and PIP2-II) are essential to activate KCNQ4 channel by inducing the coupling of the voltage-sensing domain (VSD) and the pore-forming domain (PD). Upon channel activation, PIP2-I and PIP2-II disrupt the VSD-calmodulin/CALM interaction, causing the release of CALM from the VSD which triggers the opening of the gate. Calcium suppresses KCNQ4 channel current through calcium-bound CALM C-terminus. Therefore CALM acts as calcium sensor that controls channel activity. Pore-forming subunit of the voltage-gated potassium (Kv) channel involved in the regulation of sensory cells excitability in the cochlea. KCNQ4/Kv7.4 channel is composed of 4 pore-forming subunits assembled as tetramers. Promotes the outflow of potassium ions in the repolarization phase of action potential which plays a role in regulating membrane potential of excitable cells. The channel conducts a slowly activating and deactivating current. Current often shows some inward rectification at positive potentials. Channel may be selectively permeable in vitro to other cations besides potassium, in decreasing order of affinity K(+) = Rb(+) &gt; Cs(+) &gt; Na(+). Important for normal physiological function of inner ear such as sensory perception of sound. The chain is Potassium voltage-gated channel subfamily KQT member 4 from Rattus norvegicus (Rat).